We begin with the raw amino-acid sequence, 556 residues long: Formate--tetrahydrofolate ligase (556 aa).

65 to 72 (TPAGEGKS) serves as a coordination point for ATP.

It belongs to the formate--tetrahydrofolate ligase family.

The catalysed reaction is (6S)-5,6,7,8-tetrahydrofolate + formate + ATP = (6R)-10-formyltetrahydrofolate + ADP + phosphate. Its pathway is one-carbon metabolism; tetrahydrofolate interconversion. The protein is Formate--tetrahydrofolate ligase of Streptococcus uberis (strain ATCC BAA-854 / 0140J).